The sequence spans 1875 residues: Protein MLP1 (1875 aa).

Ser-2 is modified (N-acetylserine). Coiled-coil stretches lie at residues Glu-69 to Leu-487 and Glu-531 to Ser-1678. Position 337 is a phosphothreonine (Thr-337). Ser-379 bears the Phosphoserine mark. The short motif at Gln-1496–Ser-1565 is the Required for nuclear localization element. The tract at residues Lys-1641 to Pro-1689 is disordered. A compositionally biased stretch (polar residues) spans Ser-1667–Asn-1688. 2 positions are modified to phosphoserine: Ser-1670 and Ser-1710. Residues Lys-1716 to Gly-1725 show a composition bias toward low complexity. A disordered region spans residues Lys-1716–Ile-1875. Residues Pro-1728–His-1737 are compositionally biased toward polar residues. Ser-1733 is subject to Phosphoserine. Positions Leu-1738–Leu-1748 are enriched in basic and acidic residues. Positions Thr-1787–Val-1801 are enriched in polar residues. Residue Ser-1803 is modified to Phosphoserine. Composition is skewed to basic and acidic residues over residues Thr-1807–Lys-1840 and Glu-1865–Ile-1875. Residues Asp-1834–Thr-1866 are a coiled coil.

As to quaternary structure, component of the nuclear pore complex (NPC). NPC constitutes the exclusive means of nucleocytoplasmic transport. NPCs allow the passive diffusion of ions and small molecules and the active, nuclear transport receptor-mediated bidirectional transport of macromolecules such as proteins, RNAs, ribonucleoparticles (RNPs), and ribosomal subunits across the nuclear envelope. Due to its 8-fold rotational symmetry, all subunits are present with 8 copies or multiples thereof. Interacts with NAB2, a hnRNP required for mRNA export. Interacts with MLP2. In terms of processing, may be phosphorylated by CDC28.

It localises to the nucleus. The protein resides in the nuclear pore complex. Together with the closely related MLP2, involved in the structural and functional organization of perinuclear chromatin. Together with MLP2, associates with the nuclear pore complex and form filamentous structures along the nuclear periphery. Has a role in the localization of Esc1 to nucleolar regions. Together with MLP2, mediates tethering of the some telomeres to the nuclear periphery, probably mediated by YKU70/YKU80 (HDF1/HDF2) heterodimer and show perinuclear location dependent silencing. MLP1 and MLP2 are involved in telomere length regulation but not silencing or telomere anchoring. Recognizes the 5'-splice site of pre-mRNAs and retains unspliced pre-mRNA in the nucleus without affecting splicing itself. This Saccharomyces cerevisiae (strain ATCC 204508 / S288c) (Baker's yeast) protein is Protein MLP1 (MLP1).